The chain runs to 357 residues: Inositol-tetrakisphosphate 1-kinase 3 (357 aa).

Positions 56 and 98 each coordinate 1D-myo-inositol 1,3,4-trisphosphate. ATP is bound by residues arginine 133 and lysine 183. 1D-myo-inositol 1,3,4-trisphosphate-binding residues include histidine 190 and lysine 222. ATP-binding positions include 211–222 (QEFVNHGGVLFK), serine 237, and serine 262. The Mg(2+) site is built by aspartate 302, aspartate 317, and asparagine 319. Position 319 (asparagine 319) interacts with 1D-myo-inositol 1,3,4-trisphosphate.

The protein belongs to the ITPK1 family. In terms of assembly, monomer. Mg(2+) serves as cofactor. As to expression, expressed in roots, leaves, flowers, anthers and embryos.

It carries out the reaction 1D-myo-inositol 3,4,5,6-tetrakisphosphate + ATP = 1D-myo-inositol 1,3,4,5,6-pentakisphosphate + ADP + H(+). It catalyses the reaction 1D-myo-inositol 1,3,4-trisphosphate + ATP = 1D-myo-inositol 1,3,4,5-tetrakisphosphate + ADP + H(+). The catalysed reaction is 1D-myo-inositol 1,3,4-trisphosphate + ATP = 1D-myo-inositol 1,3,4,6-tetrakisphosphate + ADP + H(+). Functionally, kinase that can phosphorylate various inositol polyphosphate such as Ins(3,4,5,6)P4 or Ins(1,3,4)P3 and participates in phytic acid biosynthesis in developing seeds. Phytic acid is the primary storage form of phosphorus in cereal grains and other plant seeds. In Oryza sativa subsp. japonica (Rice), this protein is Inositol-tetrakisphosphate 1-kinase 3.